Consider the following 1256-residue polypeptide: Pullulanase A (1256 aa).

Residues 1–44 form the signal peptide; it reads MRKTPSHTEKKMVYSIRSLKNGTGSVLIGASLVLLAMATPTISS. A disordered region spans residues 42–117; that stretch reads ISSDESTPTT…VTTETKAEEP (76 aa). Residues 48–61 are compositionally biased toward low complexity; it reads TPTTNEPNNRNTTT. Positions 79 to 90 are enriched in polar residues; the sequence is DISSPRNANASL. Residues 99-111 are compositionally biased toward low complexity; sequence TEPTTSTSPVTTE. Residues 141 to 143, tryptophan 153, aspartate 199, 248 to 250, tryptophan 261, lysine 303, and asparagine 308 contribute to the substrate site; these read WTW and WYW. 2 residues coordinate Ca(2+): serine 646 and tyrosine 648. Substrate contacts are provided by residues 652–653 and phenylalanine 728; that span reads YD. The Nucleophile role is filled by aspartate 763. Residue glutamate 792 is the Proton donor of the active site. Position 794 (tryptophan 794) interacts with substrate. 3 residues coordinate Ca(2+): methionine 813, threonine 816, and aspartate 817. Substrate contacts are provided by aspartate 824, arginine 827, and tyrosine 834. Residues aspartate 867 and aspartate 871 each contribute to the Ca(2+) site. Substrate-binding positions include asparagine 881, lysine 954, and 974-976; that span reads DSY. Position 977 (aspartate 977) interacts with Ca(2+). Residues 1126 to 1224 are disordered; that stretch reads SQNGTSHEST…TPDRQAELPN (99 aa). Positions 1134–1172 are enriched in basic and acidic residues; sequence STAEEKPDSTPSKPEHQDPAPEARPDSTKPDAKVADAEN. Low complexity predominate over residues 1181 to 1194; sequence SQAEQPAQEAQASS. The segment covering 1200 to 1210 has biased composition (polar residues); that stretch reads QNESVENSSKK. Positions 1222 to 1226 match the LPXTG sorting signal motif; it reads LPNTG. At threonine 1225 the chain carries Pentaglycyl murein peptidoglycan amidated threonine. A propeptide spans 1226–1256 (removed by sortase); it reads GIKNENKLLFAGISLLALLGLGFLLKNKKEN.

Belongs to the glycosyl hydrolase 13 family.

Its subcellular location is the secreted. It is found in the cell wall. It localises to the cell surface. The catalysed reaction is Hydrolysis of (1-&gt;6)-alpha-D-glucosidic linkages in pullulan, amylopectin and glycogen, and in the alpha- and beta-limit dextrins of amylopectin and glycogen.. Inhibited by 4-O-alpha-D-glucopyranosylmoranoline (G1M). Its function is as follows. Virulence factor. Involved in the degradation of glycogen of the mammalian host cells. Hydrolyzes the alpha-1,6-branchpoints of glycogen. Hydrolyzes pullulan. Does not hydrolyze dextran. Binds to mouse lung alveolar type II cells that are rich in glycogen stores. Is an alpha-glucan-specific carbohydrate-binding protein, which binds to amylose (pure alpha-(1,4)-linked glucose), amylopectin (alpha-(1,4)-linked glucose with alpha-(1,6) branch points), pullulan (linear polymer of mixed alpha-(1,4)- and alpha-(1,6)-linked glucose) and glycogen (similar to amylopectin with more frequent alpha-(1,6) branch points) in vitro. Does not bind to dextran (a linear polymer of alpha-(1,6)-linked glucose). The protein is Pullulanase A of Streptococcus pneumoniae serotype 2 (strain D39 / NCTC 7466).